Consider the following 535-residue polypeptide: GMP synthase [glutamine-hydrolyzing] (535 aa).

The region spanning 24–217 (KILIVDFGSQ…VRNISGLGGD (194 aa)) is the Glutamine amidotransferase type-1 domain. Residue C101 is the Nucleophile of the active site. Active-site residues include H191 and E193. In terms of domain architecture, GMPS ATP-PPase spans 218-410 (WTMHAFREEE…LGLPDVFVGR (193 aa)). 245-251 (SGGVDSA) is an ATP binding site.

Homodimer.

The enzyme catalyses XMP + L-glutamine + ATP + H2O = GMP + L-glutamate + AMP + diphosphate + 2 H(+). It functions in the pathway purine metabolism; GMP biosynthesis; GMP from XMP (L-Gln route): step 1/1. In terms of biological role, catalyzes the synthesis of GMP from XMP. This Bradyrhizobium sp. (strain ORS 278) protein is GMP synthase [glutamine-hydrolyzing].